The primary structure comprises 150 residues: MAKSGIYLGCFILILIQNMVAANPLFNRNNVQELENLKDLIHQLEERVAVNEEPEVYPESEDMKMDAEEEDAGISPGALRQSEENLLMNIVDRIAPESPLRSRFRDLAGLAKTAKSFNSCFGTRMDRIGSWSGLGCNSLKNGTKKKIFGN.

Positions 1 to 21 are cleaved as a signal peptide; sequence MAKSGIYLGCFILILIQNMVA. Positions 52–75 are disordered; sequence EEPEVYPESEDMKMDAEEEDAGIS. An intrachain disulfide couples Cys-120 to Cys-136.

It belongs to the natriuretic peptide family. As to expression, heart ventricle, and to a lower extent in heart atrium.

It is found in the secreted. Functionally, exhibits natriuretic and vasodepressor activity. The chain is Ventricular natriuretic peptide (vnp) from Anguilla japonica (Japanese eel).